Here is a 164-residue protein sequence, read N- to C-terminus: FMN reductase (NADH) RutF (164 aa).

The protein belongs to the non-flavoprotein flavin reductase family. RutF subfamily.

The enzyme catalyses FMNH2 + NAD(+) = FMN + NADH + 2 H(+). Its function is as follows. Catalyzes the reduction of FMN to FMNH2 which is used to reduce pyrimidine by RutA via the Rut pathway. The sequence is that of FMN reductase (NADH) RutF from Enterobacter cloacae subsp. cloacae (strain ATCC 13047 / DSM 30054 / NBRC 13535 / NCTC 10005 / WDCM 00083 / NCDC 279-56).